An 833-amino-acid chain; its full sequence is MutS protein homolog 5 (833 aa).

A disordered region spans residues 1–45 (MAFRATPGRTPPGPGPRSGIPSASFPSPQPPMAGPGGIEEEDEEE). Position 591 to 598 (591 to 598 (GPNSSGKS)) interacts with ATP.

This sequence belongs to the DNA mismatch repair MutS family. In terms of assembly, heterooligomer of MSH4 and MSH5. Interacts with HJURP. Interacts with REDIC1.

Its function is as follows. Involved in DNA mismatch repair and meiotic recombination processes. Facilitates crossovers between homologs during meiosis. The polypeptide is MutS protein homolog 5 (Msh5) (Mus musculus (Mouse)).